The following is a 218-amino-acid chain: Elongation factor Ts (218 aa).

An involved in Mg(2+) ion dislocation from EF-Tu region spans residues 82 to 85 (TDFV).

Belongs to the EF-Ts family.

The protein resides in the cytoplasm. In terms of biological role, associates with the EF-Tu.GDP complex and induces the exchange of GDP to GTP. It remains bound to the aminoacyl-tRNA.EF-Tu.GTP complex up to the GTP hydrolysis stage on the ribosome. The sequence is that of Elongation factor Ts from Prochlorococcus marinus (strain MIT 9313).